A 560-amino-acid polypeptide reads, in one-letter code: NADH-quinone oxidoreductase subunit C/D (560 aa).

An NADH dehydrogenase I subunit C region spans residues 2-157; the sequence is NKLENLKQLL…NNQQACTNSL (156 aa). The interval 175–560 is NADH dehydrogenase I subunit D; sequence KYLPLNIGPS…MNLIAGELDR (386 aa).

It in the N-terminal section; belongs to the complex I 30 kDa subunit family. The protein in the C-terminal section; belongs to the complex I 49 kDa subunit family. In terms of assembly, NDH-1 is composed of 13 different subunits. Subunits NuoB, CD, E, F, and G constitute the peripheral sector of the complex.

The protein localises to the cytoplasm. Its subcellular location is the cell inner membrane. The catalysed reaction is a quinone + NADH + 5 H(+)(in) = a quinol + NAD(+) + 4 H(+)(out). In terms of biological role, NDH-1 shuttles electrons from NADH, via FMN and iron-sulfur (Fe-S) centers, to quinones in the respiratory chain. The immediate electron acceptor for the enzyme in this species is believed to be ubiquinone. Couples the redox reaction to proton translocation (for every two electrons transferred, four hydrogen ions are translocated across the cytoplasmic membrane), and thus conserves the redox energy in a proton gradient. The sequence is that of NADH-quinone oxidoreductase subunit C/D from Bdellovibrio bacteriovorus (strain ATCC 15356 / DSM 50701 / NCIMB 9529 / HD100).